The sequence spans 180 residues: Adenine phosphoribosyltransferase (180 aa).

Belongs to the purine/pyrimidine phosphoribosyltransferase family. In terms of assembly, homodimer.

It is found in the cytoplasm. It carries out the reaction AMP + diphosphate = 5-phospho-alpha-D-ribose 1-diphosphate + adenine. Its pathway is purine metabolism; AMP biosynthesis via salvage pathway; AMP from adenine: step 1/1. Its function is as follows. Catalyzes a salvage reaction resulting in the formation of AMP, that is energically less costly than de novo synthesis. The sequence is that of Adenine phosphoribosyltransferase from Sinorhizobium medicae (strain WSM419) (Ensifer medicae).